Here is a 153-residue protein sequence, read N- to C-terminus: Proline-rich membrane anchor 1 (153 aa).

Residues 1-35 (MLLRDLVLRHGCCWPSLLLHCALHPLWGLVQVTHA) form the signal peptide. The Extracellular portion of the chain corresponds to 36–92 (EPQKSCSKVTDSCQHICQCRPPPPLPPPPPPPPPPRLLSAPAPNSTSCPAEDSWWSG). A PRAD domain is found at 56 to 70 (PPPPLPPPPPPPPPP). Positions 59 to 71 (PLPPPPPPPPPPR) are enriched in pro residues. The disordered stretch occupies residues 59 to 79 (PLPPPPPPPPPPRLLSAPAPN). An N-linked (GlcNAc...) asparagine glycan is attached at Asn-79. Residues 93–113 (LVIIVAVVCASLVFLTVLVII) traverse the membrane as a helical segment. Residues 114-153 (CYKAIKRKPLRKDENGASVAEYPMSSSPSNKGVDVNAAVV) are Cytoplasmic-facing. The segment at 133–153 (AEYPMSSSPSNKGVDVNAAVV) is disordered.

As to quaternary structure, interacts with ACHE, probably through disulfide bonds. Isoforms 1 and 2 are expressed in the adult brain. In matured cortical neurons, only isoform 1 is detectable.

The protein localises to the cell membrane. The protein resides in the cell junction. It localises to the synapse. Its function is as follows. Required to anchor acetylcholinesterase (ACHE) to the basal lamina of the neuromuscular junction and to the membrane of neuronal synapses in brain. Organizes ACHE into tetramers. This is Proline-rich membrane anchor 1 (Prima1) from Rattus norvegicus (Rat).